The primary structure comprises 461 residues: Fumarate hydratase class II (461 aa).

Substrate contacts are provided by residues 97–99 (SGT), 127–130 (HPND), 137–139 (SSN), and threonine 185. Residue histidine 186 is the Proton donor/acceptor of the active site. Serine 316 is a catalytic residue. Substrate-binding positions include serine 317 and 322–324 (KVN).

The protein belongs to the class-II fumarase/aspartase family. Fumarase subfamily. Homotetramer.

Its subcellular location is the cytoplasm. It catalyses the reaction (S)-malate = fumarate + H2O. The protein operates within carbohydrate metabolism; tricarboxylic acid cycle; (S)-malate from fumarate: step 1/1. Functionally, involved in the TCA cycle. Catalyzes the stereospecific interconversion of fumarate to L-malate. The polypeptide is Fumarate hydratase class II (Staphylococcus haemolyticus (strain JCSC1435)).